The following is a 172-amino-acid chain: MFNKQEFYTKEDLLNSSKGNLFGKKGPVLPAPNMLMIDRITKMTTNGGNYNKGFVSAELDIRSDMWFFSCHFINDPVMPGCLGLDAMWQLVGFYLGWIGGKGRGRALGVKEVKFTGQILPTAKTVTYLIHFRKIITRTLIMGMADGEVMCDNKIIYTAADLKVGLFTNISTF.

Residue histidine 71 is part of the active site.

This sequence belongs to the thioester dehydratase family. FabA subfamily. In terms of assembly, homodimer.

It localises to the cytoplasm. The enzyme catalyses a (3R)-hydroxyacyl-[ACP] = a (2E)-enoyl-[ACP] + H2O. It carries out the reaction (3R)-hydroxydecanoyl-[ACP] = (2E)-decenoyl-[ACP] + H2O. It catalyses the reaction (2E)-decenoyl-[ACP] = (3Z)-decenoyl-[ACP]. Its pathway is lipid metabolism; fatty acid biosynthesis. In terms of biological role, necessary for the introduction of cis unsaturation into fatty acids. Catalyzes the dehydration of (3R)-3-hydroxydecanoyl-ACP to E-(2)-decenoyl-ACP and then its isomerization to Z-(3)-decenoyl-ACP. Can catalyze the dehydratase reaction for beta-hydroxyacyl-ACPs with saturated chain lengths up to 16:0, being most active on intermediate chain length. The protein is 3-hydroxydecanoyl-[acyl-carrier-protein] dehydratase of Blochmanniella floridana.